Here is a 266-residue protein sequence, read N- to C-terminus: Glutathione S-transferase AN1595 (266 aa).

Positions 43 to 123 (SFGKLYTYKR…HVTNEDSTTT (81 aa)) constitute a GST N-terminal domain. Lysine 93, glutamate 107, cysteine 108, and asparagine 143 together coordinate glutathione. Lysine 93 is a substrate binding site. Residues 128–259 (SSLDFVQIIR…VEEGLPNAPP (132 aa)) form the GST C-terminal domain.

This sequence belongs to the GST superfamily.

The protein operates within secondary metabolite biosynthesis; terpenoid biosynthesis. Functionally, glutathione S-transferase; part of the gene cluster that mediates the biosynthesis of the diterpene ent-pimara-8(14),15-diene (PD). Within the cluster, the HMG-CoA reductase AN1593 functions in the mevalonate pathway, which produces isoprenoid precursors. The geranylgeranyl pyrophosphate (GGPP) synthase AN1592 is needed in the formation of GGPP, the precursor for diterpenes. Lastly, the pimaradiene synthase pbcA performs the 2 cyclization steps that convert GGPP to ent-pimara-8(14),15-diene. The putative roles of the remaining cluster enzymes in ent-pimara-8(14),15-diene biosynthesis is unclear. The cytochrome P450 monooxygenase AN1598, the glutathione S-transferase AN1595, the oxidoreductases AN1596 and AN1597 probably function as decorative enzymes. It is possible that in biological conditions the compound is oxidized to ent-pimara-8(14),15-dien-19-oic acid, which is a bioactive diterpene compound predominant in many plant extracts. This Emericella nidulans (strain FGSC A4 / ATCC 38163 / CBS 112.46 / NRRL 194 / M139) (Aspergillus nidulans) protein is Glutathione S-transferase AN1595.